Here is an 844-residue protein sequence, read N- to C-terminus: SWI/SNF-related matrix-associated actin-dependent regulator of chromatin subfamily A containing DEAD/H box 1 homolog (844 aa).

Over residues 1-23 the composition is skewed to low complexity; it reads MSDSTVAASASASASSSAKSSLS. Disordered stretches follow at residues 1 to 75 and 121 to 180; these read MSDS…TKLE and NCKP…STKM. The span at 30-42 shows a compositional bias: polar residues; sequence INKNASSVVASPS. The Helicase ATP-binding domain maps to 301-471; that stretch reads TVMHKQEMNG…ISLLCFVMPK (171 aa). 314–321 is a binding site for ATP; sequence DEMGLGKT. The DEGH box signature appears at 422-425; sequence DEAH. Positions 656 to 818 constitute a Helicase C-terminal domain; it reads YLDTLLPKLK…EQRCVVKLLT (163 aa). 3 positions are modified to phosphoserine: S834, S838, and S841.

This sequence belongs to the SNF2/RAD54 helicase family.

It is found in the nucleus. It catalyses the reaction ATP + H2O = ADP + phosphate + H(+). In terms of biological role, DNA helicase that possesses intrinsic ATP-dependent nucleosome-remodeling activity and is both required for DNA repair and heterochromatin organization. Promotes DNA end resection of double-strand breaks (DSBs) following DNA damage: probably acts by weakening histone DNA interactions in nucleosomes flanking DSBs. This is SWI/SNF-related matrix-associated actin-dependent regulator of chromatin subfamily A containing DEAD/H box 1 homolog (Etl1) from Drosophila melanogaster (Fruit fly).